The primary structure comprises 188 residues: 2-amino-4-hydroxy-6-hydroxymethyldihydropteridine pyrophosphokinase (188 aa).

The protein belongs to the HPPK family.

The enzyme catalyses 6-hydroxymethyl-7,8-dihydropterin + ATP = (7,8-dihydropterin-6-yl)methyl diphosphate + AMP + H(+). It functions in the pathway cofactor biosynthesis; tetrahydrofolate biosynthesis; 2-amino-4-hydroxy-6-hydroxymethyl-7,8-dihydropteridine diphosphate from 7,8-dihydroneopterin triphosphate: step 4/4. Functionally, catalyzes the transfer of pyrophosphate from adenosine triphosphate (ATP) to 6-hydroxymethyl-7,8-dihydropterin, an enzymatic step in folate biosynthesis pathway. In Mycobacterium tuberculosis (strain ATCC 25618 / H37Rv), this protein is 2-amino-4-hydroxy-6-hydroxymethyldihydropteridine pyrophosphokinase (folK).